The chain runs to 440 residues: Tetratricopeptide repeat protein 5 (440 aa).

TPR repeat units follow at residues 7–61, 68–98, 103–130, 136–174, and 179–216; these read EEAK…EEVL, AQAL…AVKL, VEAW…SGAL, KVSL…AVQM, and GRSW…AEKV. The Nuclear export signal motif lies at 13–24; the sequence is LQKLQGLVDRLY. S203 carries the phosphoserine; by ATM modification. At S221 the chain carries Phosphoserine; by CHEK2. A TPR 6 repeat occupies 224–253; sequence PDLHLNRATLHKYEESYGEALEGFSQAAAL. A mediates interaction with 28S rRNA of ribosome-coding tubulin region spans residues 285–287; it reads KPK.

As to quaternary structure, interacts with JMY and p300/EP300; the interaction occurs in the nucleus and augments the association between JMY and p300/EP300 in response to DNA damage. Interacts with PRMT5; the interaction is DNA damage-dependent and promotes PRMT5 interaction with p53/TP53 and subsequent methylation. Forms a complex with HSF1 and p300/EP300; these interactions augment chromatin-bound HSF1 and p300/EP300 histone acetyltransferase activity, resulting in enhanced heat-shock-responsive transcription. Interacts with JMY; the interaction occurs in the cytoplasm and results in the inhibition of JYM's nucleation activity. Interacts with ribosome-coding tubulin (via 60S subunit 28S rRNA and protein uL24/RPL26) and the N-terminal of nascent tubulin polypeptide (via alpha-tubulin MREC motif and beta-tubulin MREI motif); these interactions result in tubulin mRNA-targeted degradation. Interacts with ATP5F1B; the interaction occurs in the mitochondria and results in ATP production decrease. Interacts with p53/TP53; the interaction occurs in the mitochondria and results in increased apoptosis. Post-translationally, phosphorylation by ATM kinase induces nuclear accumulation while interfering with nuclear export, and phosphorylation by CHEK2 kinase enhances nuclear stability. As to expression, expressed in heart, brain, spleen, lung, liver, skeletal muscle, kidney and testis.

The protein localises to the nucleus. It is found in the cytoplasm. The protein resides in the cytoplasmic vesicle. It localises to the mitochondrion matrix. Its function is as follows. Cofactor involved in the regulation of various cellular mechanisms such as actin regulation, autophagy, chromatin regulation and DNA repair. In physiological conditions, interacts with cofactor JMY in the cytoplasm which prevents JMY's actin nucleation activity and ability to activate the Arp2/3 complex. Acts as a negative regulator of nutrient stress-induced autophagy by inhibiting JMY's interaction with MAP1LC3B, thereby preventing autophagosome formation. Involves in tubulin autoregulation by promoting its degradation in response to excess soluble tubulin. To do so, associates with the active ribosome near the ribosome exit tunnel and with nascent tubulin polypeptides early during their translation, triggering tubulin mRNA-targeted degradation. Following DNA damage, phosphorylated by DNA damage responsive protein kinases ATM and CHEK2, leading to its nuclear accumulation and stability. Nuclear TTC5/STRAP promotes the assembly of a stress-responsive p53/TP53 coactivator complex, which includes the coactivators JMY and p300, thereby increasing p53/TP53-dependent transcription and apoptosis. Also recruits arginine methyltransferase PRMT5 to p53/TP53 when DNA is damaged, allowing PRMT5 to methylate p53/TP53. In DNA stress conditions, also prevents p53/TP53 degradation by E3 ubiquitin ligase MDM2. Upon heat-shock stress, forms a chromatin-associated complex with heat-shock factor 1 HSF1 and p300/EP300 to stimulate heat-shock-responsive transcription, thereby increasing cell survival. Mitochondrial TTC5/STRAP interacts with ATP synthase subunit beta ATP5F1B which decreased ATP synthase activity and lowers mitochondrial ATP production, thereby regulating cellular respiration and mitochondrial-dependent apoptosis. Mitochondrial TTC5/STRAP also regulates p53/TP53-mediated apoptosis. This chain is Tetratricopeptide repeat protein 5, found in Mus musculus (Mouse).